The primary structure comprises 320 residues: Malate dehydrogenase (320 aa).

NAD(+) is bound by residues 10–15 (GAGMIG) and D34. The substrate site is built by R83 and R89. NAD(+) contacts are provided by residues N96 and 119–121 (ITN). Residues N121 and R152 each coordinate substrate. The active-site Proton acceptor is the H176.

This sequence belongs to the LDH/MDH superfamily. MDH type 3 family.

It carries out the reaction (S)-malate + NAD(+) = oxaloacetate + NADH + H(+). Its function is as follows. Catalyzes the reversible oxidation of malate to oxaloacetate. The chain is Malate dehydrogenase from Caulobacter sp. (strain K31).